A 133-amino-acid polypeptide reads, in one-letter code: Large ribosomal subunit protein uL15 (133 aa).

Positions 1-58 are disordered; that stretch reads MALQNLTPAPGSTHATKRLGRGQGSGNGKTAGKGNKGQRARKGYNEKRGFEGGQQPLQ. Gly residues predominate over residues 21–35; the sequence is RGQGSGNGKTAGKGN.

This sequence belongs to the universal ribosomal protein uL15 family. In terms of assembly, part of the 50S ribosomal subunit.

Binds to the 23S rRNA. The chain is Large ribosomal subunit protein uL15 from Campylobacter curvus (strain 525.92).